The sequence spans 162 residues: Endoribonuclease YbeY (162 aa).

3 residues coordinate Zn(2+): histidine 128, histidine 132, and histidine 138.

The protein belongs to the endoribonuclease YbeY family. Requires Zn(2+) as cofactor.

It is found in the cytoplasm. In terms of biological role, single strand-specific metallo-endoribonuclease involved in late-stage 70S ribosome quality control and in maturation of the 3' terminus of the 16S rRNA. The protein is Endoribonuclease YbeY of Lactococcus lactis subsp. cremoris (strain MG1363).